We begin with the raw amino-acid sequence, 199 residues long: uncharacterized protein (199 aa).

This is an uncharacterized protein from Shigella flexneri.